The sequence spans 143 residues: Spliceosomal protein DIB1 (143 aa).

This sequence belongs to the DIM1 family. Component of the 25S [U4/U6.U5] tri-snRNP.

The protein localises to the nucleus. Its function is as follows. Essential role in pre-mRNA splicing. Also essential for entry into mitosis (G2/M progression) as well as for chromosome segregation during mitosis. In Eremothecium gossypii (strain ATCC 10895 / CBS 109.51 / FGSC 9923 / NRRL Y-1056) (Yeast), this protein is Spliceosomal protein DIB1 (DIB1).